We begin with the raw amino-acid sequence, 403 residues long: Phosphopentomutase (403 aa).

Mn(2+) contacts are provided by Asp13, Asp298, His303, Asp339, His340, and His351.

The protein belongs to the phosphopentomutase family. Mn(2+) is required as a cofactor.

It is found in the cytoplasm. The catalysed reaction is 2-deoxy-alpha-D-ribose 1-phosphate = 2-deoxy-D-ribose 5-phosphate. It catalyses the reaction alpha-D-ribose 1-phosphate = D-ribose 5-phosphate. It participates in carbohydrate degradation; 2-deoxy-D-ribose 1-phosphate degradation; D-glyceraldehyde 3-phosphate and acetaldehyde from 2-deoxy-alpha-D-ribose 1-phosphate: step 1/2. Its function is as follows. Isomerase that catalyzes the conversion of deoxy-ribose 1-phosphate (dRib-1-P) and ribose 1-phosphate (Rib-1-P) to deoxy-ribose 5-phosphate (dRib-5-P) and ribose 5-phosphate (Rib-5-P), respectively. In Streptococcus pneumoniae serotype 19F (strain G54), this protein is Phosphopentomutase.